We begin with the raw amino-acid sequence, 646 residues long: Choline transporter-like protein 1 (646 aa).

At 1–27 the chain is on the cytoplasmic side; that stretch reads MGCCGCGSEEGSVRQWKPLEQRSCTDV. Residues 28-48 form a helical membrane-spanning segment; it reads LWLLIFVLFCIGMAIICGFAI. The Extracellular segment spans residues 49–207; the sequence is ASGAAQRLVF…RVITGVMTSK (159 aa). Asparagine 133 carries an N-linked (GlcNAc...) asparagine glycan. The helical transmembrane segment at 208–228 threads the bilayer; sequence EIIVGLCLMSLVLSILLMVII. Residues 229-233 lie on the Cytoplasmic side of the membrane; sequence RYISK. A helical transmembrane segment spans residues 234–254; it reads VLVWILAILTIIGSIGGTAVL. The Extracellular portion of the chain corresponds to 255–281; the sequence is WWLYADHKKTLKLDPSQGDVAADNVTA. N-linked (GlcNAc...) asparagine glycosylation is present at asparagine 278. The chain crosses the membrane as a helical span at residues 282-302; that stretch reads LLVCAIIATVITVILLLLMLI. Topologically, residues 303–308 are cytoplasmic; it reads MRKRVA. Residues 309–329 traverse the membrane as a helical segment; the sequence is LTIALFHVAGKVFIHIPFLIF. The Extracellular segment spans residues 330–331; the sequence is QS. The chain crosses the membrane as a helical span at residues 332–352; sequence LWTFLALAFFWIYWIAVLLLL. The Cytoplasmic segment spans residues 353–373; the sequence is ATAGYPQKKDQGYVEFKVSGP. A helical transmembrane segment spans residues 374–394; sequence LQYTWIYHLVGLIWISEFILA. At 395-435 the chain is on the extracellular side; the sequence is CQQMTIAGAVVTYYFTRDKHNLPATPILASMCRLIKYHLGT. The chain crosses the membrane as a helical span at residues 436–456; sequence VAKGSFIITLIKIPQMILVYI. Topologically, residues 457-530 are cytoplasmic; that stretch reads HSQLKGKENA…RVAAINTVGD (74 aa). Residues 531–551 form a helical membrane-spanning segment; that stretch reads FVLFLGKLLIVLVTGFVGIIL. Residues 552 to 559 lie on the Extracellular side of the membrane; it reads LNYQRDYT. A helical transmembrane segment spans residues 560–580; it reads VWVLPLIIICLFAFFVSHCFL. Topologically, residues 581 to 646 are cytoplasmic; it reads SIYEMVVDVL…KSMASGSDNA (66 aa).

Belongs to the CTL (choline transporter-like) family. In terms of tissue distribution, present in myelinated structures from brain and spinal cord (at protein level).

It is found in the cell membrane. It localises to the mitochondrion outer membrane. It carries out the reaction choline(out) + n H(+)(in) = choline(in) + n H(+)(out). It catalyses the reaction ethanolamine(out) + n H(+)(in) = ethanolamine(in) + n H(+)(out). Its function is as follows. Probable choline transporter. May be involved in membrane synthesis and myelin production. The protein is Choline transporter-like protein 1 (slc44a1) of Torpedo marmorata (Marbled electric ray).